We begin with the raw amino-acid sequence, 251 residues long: Small ribosomal subunit protein uS2B (251 aa).

At serine 2 the chain carries N-acetylserine. The segment covering 214 to 225 (AVEEASATGATE) has biased composition (low complexity). Residues 214 to 251 (AVEEASATGATEEATEEATEETTEATEWAEDNTENATW) are disordered. The span at 226 to 251 (EATEEATEETTEATEWAEDNTENATW) shows a compositional bias: acidic residues.

It belongs to the universal ribosomal protein uS2 family. Component of the small ribosomal subunit. Mature ribosomes consist of a small (40S) and a large (60S) subunit. The 40S subunit contains about 33 different proteins and 1 molecule of RNA (18S). The 60S subunit contains about 49 different proteins and 3 molecules of RNA (25S, 5.8S and 5S). Interacts with RPS21.

It is found in the cytoplasm. Functionally, required for the assembly and/or stability of the 40S ribosomal subunit. Required for the processing of the 20S rRNA-precursor to mature 18S rRNA in a late step of the maturation of 40S ribosomal subunits. This chain is Small ribosomal subunit protein uS2B, found in Vanderwaltozyma polyspora (strain ATCC 22028 / DSM 70294 / BCRC 21397 / CBS 2163 / NBRC 10782 / NRRL Y-8283 / UCD 57-17) (Kluyveromyces polysporus).